Here is a 284-residue protein sequence, read N- to C-terminus: RNase adapter protein RapZ (284 aa).

G8 to S15 contributes to the ATP binding site. Position 56–59 (D56–N59) interacts with GTP. The interval R266 to S284 is RNA-binding.

Belongs to the RapZ-like family. RapZ subfamily. Homotrimer.

Modulates the synthesis of GlmS, by affecting the processing and stability of the regulatory small RNA GlmZ. When glucosamine-6-phosphate (GlcN6P) concentrations are high in the cell, RapZ binds GlmZ and targets it to cleavage by RNase E. Consequently, GlmZ is inactivated and unable to activate GlmS synthesis. Under low GlcN6P concentrations, RapZ is sequestered and inactivated by an other regulatory small RNA, GlmY, preventing GlmZ degradation and leading to synthesis of GlmS. The chain is RNase adapter protein RapZ from Sodalis glossinidius (strain morsitans).